The chain runs to 65 residues: Alpha-toxin Bs-Tx28 (65 aa).

The 63-residue stretch at 3-65 (RDAYIADDKN…VPIRIPGKCR (63 aa)) folds into the LCN-type CS-alpha/beta domain. Cystine bridges form between cysteine 13–cysteine 64, cysteine 17–cysteine 37, cysteine 23–cysteine 47, and cysteine 27–cysteine 49. Arginine 65 carries the arginine amide modification.

The protein belongs to the long (4 C-C) scorpion toxin superfamily. Sodium channel inhibitor family. Alpha subfamily. Expressed by the venom gland.

It localises to the secreted. Functionally, alpha toxins bind voltage-independently at site-3 of sodium channels (Nav) and inhibit the inactivation of the activated channels, thereby blocking neuronal transmission. This toxin inhibits the inactivation of activated TTX-sensitive sodium channels (Nav). This is Alpha-toxin Bs-Tx28 from Hottentotta tamulus sindicus (Scorpion).